The following is a 588-amino-acid chain: Adenylate kinase 5, chloroplastic (588 aa).

The tract at residues 1–34 is disordered; that stretch reads MASLSLSSAHFSSTSSSSRSSISTSSLSPSSTSL. A chloroplast-targeting transit peptide spans 1–73; sequence MASLSLSSAH…SFSTSNSQIR (73 aa). 89–94 is an ATP binding site; it reads ASGKGT. Residues 109–138 are NMP; sequence STGDLLRAEVSSGTDIGKRAKEFMNSGSLV. AMP contacts are provided by residues Arg-115, 136–138, 165–168, and Gln-172; these read SLV and GFPR. The interval 202-235 is LID; it reads GRRLDPVTGKIYHIKNYPPESDEIKARLVTRPDD. Arg-203 is a binding site for ATP. Arg-232 and Arg-243 together coordinate AMP.

Belongs to the adenylate kinase family. Monomer.

It is found in the plastid. Its subcellular location is the chloroplast. The catalysed reaction is AMP + ATP = 2 ADP. Functionally, catalyzes the reversible transfer of the terminal phosphate group between ATP and AMP. This chain is Adenylate kinase 5, chloroplastic, found in Arabidopsis thaliana (Mouse-ear cress).